Here is a 716-residue protein sequence, read N- to C-terminus: Putative cuticle collagen 99 (716 aa).

Disordered regions lie at residues 85–122 (LPSS…PVGP) and 183–472 (PPGP…SLVA). 3 triple-helical region regions span residues 179–238 (GMPG…KGDR), 265–298 (LPGP…FDGE), and 302–330 (GPKG…EKGD). A compositionally biased stretch (pro residues) spans 266 to 277 (PGPPGPPGPPGP). Over residues 280 to 290 (RDGRHGLKGDR) the composition is skewed to basic and acidic residues. The span at 349-358 (PGPPGPPGPP) shows a compositional bias: pro residues. Triple-helical region stretches follow at residues 385–411 (GPPG…AGAA) and 422–467 (GPPG…GRHG). The span at 389-401 (EKGERGERGEPGD) shows a compositional bias: basic and acidic residues. The span at 402-422 (RGLPGAAGAANLLNGGKALVG) shows a compositional bias: low complexity. The span at 429-444 (RDGRPGDKGEKGEQGL) shows a compositional bias: basic and acidic residues. Residue asparagine 474 is glycosylated (N-linked (GlcNAc...) asparagine). Residues 503-716 (KNVIPGPPGP…GAETRPPVTD (214 aa)) form a disordered region. Triple-helical region stretches follow at residues 507-557 (PGPP…QPGA), 566-603 (GPRG…PPGP), and 605-664 (GLRG…PGLD). Over residues 568–577 (RGPPGLPGPP) the composition is skewed to pro residues.

The protein belongs to the cuticular collagen family. As to quaternary structure, collagen polypeptide chains are complexed within the cuticle by disulfide bonds and other types of covalent cross-links.

Functionally, nematode cuticles are composed largely of collagen-like proteins. The cuticle functions both as an exoskeleton and as a barrier to protect the worm from its environment. The sequence is that of Putative cuticle collagen 99 (col-99) from Caenorhabditis elegans.